The following is a 245-amino-acid chain: 5'-nucleotidase SurE (245 aa).

A divalent metal cation is bound by residues Asp8, Asp9, Ser39, and Asn97.

Belongs to the SurE nucleotidase family. A divalent metal cation is required as a cofactor.

It localises to the cytoplasm. The enzyme catalyses a ribonucleoside 5'-phosphate + H2O = a ribonucleoside + phosphate. Its function is as follows. Nucleotidase that shows phosphatase activity on nucleoside 5'-monophosphates. The protein is 5'-nucleotidase SurE of Clostridium kluyveri (strain NBRC 12016).